The primary structure comprises 124 residues: Tax1-binding protein 3 (124 aa).

N-acetylserine is present on Ser-2. A PDZ domain is found at 15–112; sequence RVEIHKLRQG…EVVRLLVTRQ (98 aa). Ser-61 is subject to Phosphoserine.

As to quaternary structure, interacts (via its PDZ domain) with GLS2. Interacts (via its PDZ domain) with RTKN (via the C-terminal region); this interaction facilitates Rho-mediated activation of the FOS serum response element (SRE). Interacts (via its PDZ domain) with CTNNB1; this interaction inhibits the transcriptional activity of CTNNB1. Interacts with HTLV-1 TAX protein. Interacts (via PDZ domain) with ARHGEF16. Interacts (via PDZ domain) with KCNJ4 (via C-terminus). Competes with LIN7A for KCNJ4 binding. Interacts with ADGRB2. As to expression, ubiquitous. Detected in brain, heart, kidney, lung, small intestine and skeletal muscle. Detected in various cell lines including HeLa. Weakly expressed in peripheral blood leukocytes.

It is found in the cytoplasm. The protein localises to the nucleus. The protein resides in the cell membrane. Its function is as follows. May regulate a number of protein-protein interactions by competing for PDZ domain binding sites. Binds CTNNB1 and may thereby act as an inhibitor of the Wnt signaling pathway. Competes with LIN7A for KCNJ4 binding, and thereby promotes KCNJ4 internalization. May play a role in the Rho signaling pathway. May play a role in activation of CDC42 by the viral protein HPV16 E6. The chain is Tax1-binding protein 3 from Homo sapiens (Human).